The following is a 328-amino-acid chain: dITP/XTP pyrophosphatase (328 aa).

Residues 1–129 (MSEKIYEYKD…ATSEQGFGDT (129 aa)) form a unknown region. Positions 130–324 (ILIATRNEGK…KLMEVFPAWQ (195 aa)) are NTP pyrophosphatase. 134–139 (TRNEGK) is a binding site for substrate. D196 (proton acceptor) is an active-site residue. D196 is a binding site for Mg(2+). Substrate-binding positions include S197, 280–283 (FGYD), K303, and 308–309 (HR).

This sequence belongs to the HAM1 NTPase family. Homodimer. Mg(2+) serves as cofactor.

The catalysed reaction is XTP + H2O = XMP + diphosphate + H(+). It catalyses the reaction dITP + H2O = dIMP + diphosphate + H(+). It carries out the reaction ITP + H2O = IMP + diphosphate + H(+). Functionally, pyrophosphatase that catalyzes the hydrolysis of nucleoside triphosphates to their monophosphate derivatives, with a high preference for the non-canonical purine nucleotides XTP (xanthosine triphosphate), dITP (deoxyinosine triphosphate) and ITP. Seems to function as a house-cleaning enzyme that removes non-canonical purine nucleotides from the nucleotide pool, thus preventing their incorporation into DNA/RNA and avoiding chromosomal lesions. The polypeptide is dITP/XTP pyrophosphatase (Streptococcus pyogenes serotype M6 (strain ATCC BAA-946 / MGAS10394)).